The following is a 158-amino-acid chain: Glycine/sarcosine/betaine reductase complex component A1 (158 aa).

Residue U46 is part of the active site. Position 46 (U46) is a non-standard amino acid, selenocysteine.

It belongs to the GrdA family. As to quaternary structure, monomer. Component of the glycine, sarcosine and betaine reductase complexes, together with components B and C.

The enzyme catalyses acetyl phosphate + [thioredoxin]-disulfide + NH4(+) + H2O = [thioredoxin]-dithiol + glycine + phosphate + H(+). It carries out the reaction acetyl phosphate + methylamine + [thioredoxin]-disulfide + H2O = sarcosine + [thioredoxin]-dithiol + phosphate + H(+). It catalyses the reaction acetyl phosphate + trimethylamine + [thioredoxin]-disulfide + H2O = glycine betaine + [thioredoxin]-dithiol + phosphate + H(+). In terms of biological role, in the first step of glycine, betaine and sarcosine reductases, the substrate is bound to component PB via a Schiff base intermediate. Then the PB-activated substrate is nucleophilically attacked by the selenol anion of component PA to transform it to a carboxymethylated selenoether and the respective amine. By action of component PC, acetyl phosphate is formed, leaving component PA in its oxidized state. Finally component PA becomes reduced by the thioredoxin system to start a new catalytic cycle of reductive deamination. This Photobacterium profundum (strain SS9) protein is Glycine/sarcosine/betaine reductase complex component A1 (grdA1).